Reading from the N-terminus, the 339-residue chain is Serpentine receptor class delta-32 (339 aa).

7 helical membrane passes run 14 to 34 (AAVVSTLGIIFNGFLLFLIFF), 45 to 65 (VFLANTSITQLGYCICFLLTV), 94 to 114 (IFTTMLHFAVNSFLSIMLSMV), 128 to 148 (SGAFAMCILAYMIPLSMVVSI), 188 to 208 (LWVACCVSILCIPIYSVMFWC), 237 to 257 (ALTVQSLIPVFTLFPASLIFL), and 269 to 289 (FGYIIISLLSLSPTIDPLVTI).

This sequence belongs to the nematode receptor-like protein srd family.

The protein localises to the membrane. In Caenorhabditis elegans, this protein is Serpentine receptor class delta-32 (srd-32).